We begin with the raw amino-acid sequence, 319 residues long: UDP-3-O-acylglucosamine N-acyltransferase (319 aa).

His230 functions as the Proton acceptor in the catalytic mechanism.

It belongs to the transferase hexapeptide repeat family. LpxD subfamily. Homotrimer.

The catalysed reaction is a UDP-3-O-[(3R)-3-hydroxyacyl]-alpha-D-glucosamine + a (3R)-hydroxyacyl-[ACP] = a UDP-2-N,3-O-bis[(3R)-3-hydroxyacyl]-alpha-D-glucosamine + holo-[ACP] + H(+). The protein operates within bacterial outer membrane biogenesis; LPS lipid A biosynthesis. Catalyzes the N-acylation of UDP-3-O-acylglucosamine using 3-hydroxyacyl-ACP as the acyl donor. Is involved in the biosynthesis of lipid A, a phosphorylated glycolipid that anchors the lipopolysaccharide to the outer membrane of the cell. In Campylobacter lari (strain RM2100 / D67 / ATCC BAA-1060), this protein is UDP-3-O-acylglucosamine N-acyltransferase.